The following is a 376-amino-acid chain: Succinate--CoA ligase [ADP-forming] subunit beta (376 aa).

The region spanning 9–234 (KAIAKKYGIP…ERELSELEKE (226 aa)) is the ATP-grasp domain. ATP contacts are provided by residues lysine 45, 52–54 (GRG), glutamate 91, glutamate 94, and glutamate 99. Mg(2+) is bound by residues asparagine 191 and aspartate 204. Residues asparagine 254 and 311 to 313 (GIT) each bind substrate.

Belongs to the succinate/malate CoA ligase beta subunit family. In terms of assembly, heterotetramer of two alpha and two beta subunits. Mg(2+) serves as cofactor.

It catalyses the reaction succinate + ATP + CoA = succinyl-CoA + ADP + phosphate. It carries out the reaction GTP + succinate + CoA = succinyl-CoA + GDP + phosphate. It participates in carbohydrate metabolism; tricarboxylic acid cycle; succinate from succinyl-CoA (ligase route): step 1/1. Functionally, succinyl-CoA synthetase functions in the citric acid cycle (TCA), coupling the hydrolysis of succinyl-CoA to the synthesis of either ATP or GTP and thus represents the only step of substrate-level phosphorylation in the TCA. The beta subunit provides nucleotide specificity of the enzyme and binds the substrate succinate, while the binding sites for coenzyme A and phosphate are found in the alpha subunit. The polypeptide is Succinate--CoA ligase [ADP-forming] subunit beta (Ignicoccus hospitalis (strain KIN4/I / DSM 18386 / JCM 14125)).